Here is a 259-residue protein sequence, read N- to C-terminus: Aspartate/glutamate leucyltransferase (259 aa).

The protein belongs to the R-transferase family. Bpt subfamily.

It is found in the cytoplasm. The enzyme catalyses N-terminal L-glutamyl-[protein] + L-leucyl-tRNA(Leu) = N-terminal L-leucyl-L-glutamyl-[protein] + tRNA(Leu) + H(+). The catalysed reaction is N-terminal L-aspartyl-[protein] + L-leucyl-tRNA(Leu) = N-terminal L-leucyl-L-aspartyl-[protein] + tRNA(Leu) + H(+). Functions in the N-end rule pathway of protein degradation where it conjugates Leu from its aminoacyl-tRNA to the N-termini of proteins containing an N-terminal aspartate or glutamate. This is Aspartate/glutamate leucyltransferase from Sinorhizobium medicae (strain WSM419) (Ensifer medicae).